Here is a 498-residue protein sequence, read N- to C-terminus: Acetyl-coenzyme A carboxylase carboxyl transferase subunit beta, chloroplastic (498 aa).

The interval 36 to 59 is disordered; that stretch reads SVNEDPIINDMDKDIPSGSDSDNS. A CoA carboxyltransferase N-terminal domain is found at 231-498; that stretch reads LWVQCENCYG…FFPLNQNSIK (268 aa). Zn(2+) contacts are provided by C235, C238, C254, and C257. A C4-type zinc finger spans residues 235-257; that stretch reads CENCYGLNYKRFLKSKMNICEHC.

Belongs to the AccD/PCCB family. In terms of assembly, acetyl-CoA carboxylase is a heterohexamer composed of biotin carboxyl carrier protein, biotin carboxylase and 2 subunits each of ACCase subunit alpha and ACCase plastid-coded subunit beta (accD). The cofactor is Zn(2+).

The protein localises to the plastid. The protein resides in the chloroplast stroma. It catalyses the reaction N(6)-carboxybiotinyl-L-lysyl-[protein] + acetyl-CoA = N(6)-biotinyl-L-lysyl-[protein] + malonyl-CoA. The protein operates within lipid metabolism; malonyl-CoA biosynthesis; malonyl-CoA from acetyl-CoA: step 1/1. Functionally, component of the acetyl coenzyme A carboxylase (ACC) complex. Biotin carboxylase (BC) catalyzes the carboxylation of biotin on its carrier protein (BCCP) and then the CO(2) group is transferred by the transcarboxylase to acetyl-CoA to form malonyl-CoA. This Morus indica (Mulberry) protein is Acetyl-coenzyme A carboxylase carboxyl transferase subunit beta, chloroplastic.